The chain runs to 292 residues: NAD kinase (292 aa).

Asp73 acts as the Proton acceptor in catalysis. Residues 73–74 (DG), 147–148 (NE), His158, Arg175, Asp177, 188–193 (TAYSLS), and Gln247 each bind NAD(+).

It belongs to the NAD kinase family. The cofactor is a divalent metal cation.

Its subcellular location is the cytoplasm. The catalysed reaction is NAD(+) + ATP = ADP + NADP(+) + H(+). Involved in the regulation of the intracellular balance of NAD and NADP, and is a key enzyme in the biosynthesis of NADP. Catalyzes specifically the phosphorylation on 2'-hydroxyl of the adenosine moiety of NAD to yield NADP. This is NAD kinase from Sodalis glossinidius (strain morsitans).